We begin with the raw amino-acid sequence, 158 residues long: MTWITPKKAIMLAAAAEGGTKLNAFDNALLKMGIGNVNLVKLSSVIPAHIEWLDELPKNIPIGMLLPTVYAHIESDEPGSTISAALGVGISEGNEGGLIYEYAGYCKREEAEDMVRKMVEEGFKVRGWKLKEFKVVSAEITVKEKPAAAVAAVIMFPY.

Ser-44 carries the pyruvic acid (Ser) modification.

The protein belongs to the PdaD family. It depends on pyruvate as a cofactor.

It catalyses the reaction L-arginine + H(+) = agmatine + CO2. This chain is Pyruvoyl-dependent arginine decarboxylase, found in Pyrococcus horikoshii (strain ATCC 700860 / DSM 12428 / JCM 9974 / NBRC 100139 / OT-3).